The primary structure comprises 315 residues: Acetyl-coenzyme A carboxylase carboxyl transferase subunit alpha (315 aa).

The region spanning 40–293 (LQDKSKTLTE…REELSSQLAM (254 aa)) is the CoA carboxyltransferase C-terminal domain.

Belongs to the AccA family. In terms of assembly, acetyl-CoA carboxylase is a heterohexamer composed of biotin carboxyl carrier protein (AccB), biotin carboxylase (AccC) and two subunits each of ACCase subunit alpha (AccA) and ACCase subunit beta (AccD).

Its subcellular location is the cytoplasm. It catalyses the reaction N(6)-carboxybiotinyl-L-lysyl-[protein] + acetyl-CoA = N(6)-biotinyl-L-lysyl-[protein] + malonyl-CoA. The protein operates within lipid metabolism; malonyl-CoA biosynthesis; malonyl-CoA from acetyl-CoA: step 1/1. Functionally, component of the acetyl coenzyme A carboxylase (ACC) complex. First, biotin carboxylase catalyzes the carboxylation of biotin on its carrier protein (BCCP) and then the CO(2) group is transferred by the carboxyltransferase to acetyl-CoA to form malonyl-CoA. The sequence is that of Acetyl-coenzyme A carboxylase carboxyl transferase subunit alpha from Pseudomonas syringae pv. syringae (strain B728a).